Consider the following 102-residue polypeptide: Protein transport protein sec61 subunit beta (102 aa).

Polar residues predominate over residues 1–15 (MSSTKASGSVKNSAA). The interval 1–53 (MSSTKASGSVKNSAASAPGGPKSQIRRRAAVEKNTKESNSGPAGARAAGAPGS) is disordered. The Cytoplasmic portion of the chain corresponds to 1-72 (MSSTKASGSV…DEASGFKVDP (72 aa)). A compositionally biased stretch (low complexity) spans 41 to 52 (GPAGARAAGAPG). A helical membrane pass occupies residues 73–93 (VVVMVLSVGFIASVFLLHIVA).

This sequence belongs to the SEC61-beta family. Heterotrimeric complex composed of SEC61, SBH1 and SSS1.

The protein localises to the endoplasmic reticulum membrane. Its function is as follows. Necessary for protein translocation in the endoplasmic reticulum. The chain is Protein transport protein sec61 subunit beta (sbh1) from Schizosaccharomyces pombe (strain 972 / ATCC 24843) (Fission yeast).